The chain runs to 93 residues: Small ribosomal subunit protein uS19 (93 aa).

This sequence belongs to the universal ribosomal protein uS19 family.

Functionally, protein S19 forms a complex with S13 that binds strongly to the 16S ribosomal RNA. The polypeptide is Small ribosomal subunit protein uS19 (Oleidesulfovibrio alaskensis (strain ATCC BAA-1058 / DSM 17464 / G20) (Desulfovibrio alaskensis)).